Reading from the N-terminus, the 243-residue chain is MNRIKAVGYENNELKEKAQLLADQLNLQLDQNADTCLFVTSEKLTLKIRNFSLMFADFSAMTWSKRRGEGKRQGLIRACKPTKGIKILDATAGWGKDAAILATFGADVLMLERHPVMAALLTDALSRRNEADIQKICLSLIASDAISFLHSLQEKDYPDIIYIDPMHPERNKSALVKKEMQVLQQLIGTDHDAMELIELSLSHVKSRVVVKWPQKVKPLLPPDASIDGKTVRFDIYMPQFSSN.

Residues E112–R113 and D164 each bind S-adenosyl-L-methionine.

This sequence belongs to the methyltransferase superfamily. RsmJ family.

The protein localises to the cytoplasm. The catalysed reaction is guanosine(1516) in 16S rRNA + S-adenosyl-L-methionine = N(2)-methylguanosine(1516) in 16S rRNA + S-adenosyl-L-homocysteine + H(+). Functionally, specifically methylates the guanosine in position 1516 of 16S rRNA. The polypeptide is Ribosomal RNA small subunit methyltransferase J (Legionella pneumophila (strain Lens)).